Consider the following 347-residue polypeptide: Gentisate 1,2 dioxygenase 1 (347 aa).

The Cupin type-2 domain occupies 96-163; the sequence is LQLILPGEVA…DSDKPMIWMD (68 aa).

Belongs to the gentisate 1,2-dioxygenase family. In terms of assembly, homotetramer. Fe(2+) is required as a cofactor.

The enzyme catalyses 2,5-dihydroxybenzoate + O2 = 3-maleylpyruvate + H(+). Its activity is regulated as follows. Completely inhibited by the presence of 5 mM Cu(2+). Partially inhibited with 5 mM Mn(2+), Zn(2+) or EDTA. Its function is as follows. Involved in the degradation of gentisate. Catalyzes the conversion of gentisate (2,5-dihydroxybenzoate) to maleylpyruvate. Exhibits broad substrate specificities towards alkyl and halogenated gentisates. This is Gentisate 1,2 dioxygenase 1 from Aquipseudomonas alcaligenes (Pseudomonas alcaligenes).